The sequence spans 344 residues: Signal peptide peptidase (344 aa).

Topologically, residues 1–11 (MKNCERFANLA) are lumenal. A helical transmembrane segment spans residues 12–32 (LAGLTLAPLVVRVNPNLNVIL). Topologically, residues 33-62 (TACITVYVGCFRSVKDTPPTETMSKEHAMR) are cytoplasmic. The chain crosses the membrane as a helical span at residues 63–83 (FPLVGSAMLLSLFLLFKFLSK). The Lumenal portion of the chain corresponds to 84-89 (DLVNAV). The helical transmembrane segment at 90-110 (LTAYFFVLGIVALSATLLPAI) threads the bilayer. Over 111 to 136 (RRFLPNPWNDNLIVWRFPYFKSLEVE) the chain is Cytoplasmic. Residues 137–157 (FTKSQVVAGIPGTFFCAWYAW) form a helical membrane-spanning segment. The Lumenal portion of the chain corresponds to 158 to 160 (KKH). The helical transmembrane segment at 161–181 (WLANNILGLSFCIQGIEMLSL) threads the bilayer. Over 182 to 188 (GSFKTGA) the chain is Cytoplasmic. A helical transmembrane segment spans residues 189–209 (ILLAGLFFYDIFWVFFTPVMV). The active site involves Asp198. Topologically, residues 210-230 (SVAKSFDAPIKLLFPTGDALR) are lumenal. The helical transmembrane segment at 231–251 (PYSMLGLGDIVIPGIFVALAL) threads the bilayer. The active site involves Asp239. The Cytoplasmic portion of the chain corresponds to 252 to 263 (RFDVSRRRQPQY). Residues 264 to 284 (FTSAFIGYAVGVILTIVVMNW) traverse the membrane as a helical segment. Over 285 to 290 (FQAAQP) the chain is Lumenal. The short motif at 290–292 (PAL) is the PAL element. Residues 291–311 (ALLYIVPAVIGFLASHCIWNG) traverse the membrane as a helical segment. Residues 312–344 (DIKPLLAFDESKTEEATTDESKTSEEVNKAHDE) are Cytoplasmic-facing. A disordered region spans residues 323–344 (KTEEATTDESKTSEEVNKAHDE).

It belongs to the peptidase A22B family. Ubiquitous with the highest expression in emerging leaves, roots, and floral tissues (at the protein level). Highly detected in pollen.

The protein localises to the endoplasmic reticulum membrane. In terms of biological role, intramembrane-cleaving aspartic protease (I-CLiP) that cleaves type II membrane signal peptides in the hydrophobic plane of the membrane. Catalyzes intramembrane proteolysis of some signal peptides after they have been cleaved from a preprotein, resulting in the release of the fragment from the ER membrane into the cytoplasm. Plays a critical role in the development and function of the reproductive tissues, especially in pollen development. The sequence is that of Signal peptide peptidase (SPP) from Arabidopsis thaliana (Mouse-ear cress).